Reading from the N-terminus, the 453-residue chain is CBL-interacting protein kinase 24 (453 aa).

In terms of domain architecture, Protein kinase spans 18–271 (YEVGRTIGQG…IEQIREDTWF (254 aa)). Residues 24–32 (IGQGTFAKV) and Lys47 each bind ATP. The Proton acceptor role is filled by Asp141. The segment at 159–186 (DFGLSTLAQKGVGLLHTTCGTPNYVAPE) is activation loop. In terms of domain architecture, NAF spans 310–336 (NDGGPLVMNAFEMITLSQGLDLSALFD). Residues 343-372 (KRQTRFVSRKPAKTIVATIEVVAETMGLKV) form a PPI region.

Belongs to the protein kinase superfamily. CAMK Ser/Thr protein kinase family. SNF1 subfamily. Interacts with CBL4. Mn(2+) serves as cofactor.

The enzyme catalyses L-seryl-[protein] + ATP = O-phospho-L-seryl-[protein] + ADP + H(+). It catalyses the reaction L-threonyl-[protein] + ATP = O-phospho-L-threonyl-[protein] + ADP + H(+). Functionally, involved in the regulatory pathway for the control of intracellular Na(+) and K(+) homeostasis and salt tolerance. Operates in synergy with CBL4 to activate the plasma membrane Na(+)/H(+) antiporter SOS1. CIPK serine-threonine protein kinases interact with CBL proteins. Binding of a CBL protein to the regulatory NAF domain of CIPK protein lead to the activation of the kinase in a calcium-dependent manner. This Oryza sativa subsp. japonica (Rice) protein is CBL-interacting protein kinase 24 (CIPK24).